Here is a 745-residue protein sequence, read N- to C-terminus: Junction plakoglobin (745 aa).

M1 bears the N-acetylmethionine mark. The O-linked (GlcNAc) threonine glycan is linked to T14. Phosphoserine occurs at positions 99 and 125. ARM repeat units follow at residues 132–171, 172–215, 216–255, 258–297, 298–341, 342–381, 383–420, 423–464, 470–510, 512–551, 574–613, and 615–661; these read NYQDDAELATRALPELTKLLNDEDPVVVTKAAMIVNQLSK, KEAS…LSHH, REGLLAIFKSGGIPALVRMLSSPVESVLFYAITTLHNLLL, EGAKMAVRLADGLQKMVPLLNKNNPKFLAITTDCLQLLAY, GNQE…LSVC, PSNKPAIVEAGGMQALGKHLTSNSPRLVQNCLWTLRNLSD, ATKQEGLESVLKILVNQLSVDDVNVLTCATGTLSNLTC, SKNK…HLTS, EMAQ…NLAL, PANHAPLQEAAVIPRLVQLLVKAHQDAQRHVAAGTQQPYT, PMNRMEIFRLNTIPLFVQLLYSSVENIQRVAAGVLCELAQ, and KEAA…PDYR. Residues 132-297 form an interaction with DSC1 and DSG1 region; sequence NYQDDAELAT…TTDCLQLLAY (166 aa). S182 is modified (phosphoserine). The interaction with DSC1 stretch occupies residues 574–661; the sequence is PMNRMEIFRL…ISEDKNPDYR (88 aa). Phosphoserine occurs at positions 665 and 730.

The protein belongs to the beta-catenin family. In terms of assembly, homodimer. Component of an E-cadherin/catenin adhesion complex composed of at least E-cadherin/CDH1 and gamma-catenin/JUP, and possibly alpha-catenin/CTNNA1; the complex is located to adherens junctions. The stable association of CTNNA1 is controversial as CTNNA1 was shown not to bind to F-actin when assembled in the complex. Interacts with MUC1. Interacts with CAV1. Interacts with PTPRJ. Interacts with DSG1. Interacts with DSC1 and DSC2. Interacts with PKP2. Interacts with PKP3 (via N-terminus); the interaction is required for PKP3 localization to desmosome cell-cell junctions. Interacts with DSG4. May be phosphorylated by FER. Expressed in the heart (at protein level).

The protein resides in the cell junction. It is found in the adherens junction. It localises to the desmosome. The protein localises to the cytoplasm. Its subcellular location is the cytoskeleton. The protein resides in the cell membrane. It is found in the nucleus. In terms of biological role, common junctional plaque protein. The membrane-associated plaques are architectural elements in an important strategic position to influence the arrangement and function of both the cytoskeleton and the cells within the tissue. The presence of plakoglobin in both the desmosomes and in the intermediate junctions suggests that it plays a central role in the structure and function of submembranous plaques. Acts as a substrate for VE-PTP and is required by it to stimulate VE-cadherin function in endothelial cells. Can replace beta-catenin in E-cadherin/catenin adhesion complexes which are proposed to couple cadherins to the actin cytoskeleton. This is Junction plakoglobin from Homo sapiens (Human).